The primary structure comprises 463 residues: MFIDGKWINREDMDVINPYSLEVIKKIPALSREEAKEAIDTAEKYKEVMKNLPITKRYNILMNIAKQIKEKKEELAKILAIDAGKPIKQARVEVERSIGTFKLAAFYVKEHRDEVIPSDDRLIFTRREPVGIVGAITPFNFPLNLSAHKIAPAIATGNVIVHHPSSKAPLVCIELAKIIENALKKYNVPLGVYNLLTGAGEVVGDEIVVNEKVNMISFTGSSKVGELITKKAGFKKIALELGGVNPNIVLKDADLNKAVNALIKGSFIYAGQVCISVGMILVDESIADKFIEMFVNKAKVLNVGNPLDEKTDVGPLISVEHAEWVEKVVEKAIDEGGKLLLGGKRDKALFYPTILEVDRDNILCKTETFAPVIPIIRTNEEEMIDIANSTEYGLHSAIFTNDINKSLKFAENLEFGGVVINDSSLFRQDNMPFGGVKKSGLGREGVKYAMEEMSNIKTIIISK.

220-225 is a binding site for NAD(+); it reads GSSKVG. Residues E240 and C274 contribute to the active site.

Belongs to the aldehyde dehydrogenase family. In terms of assembly, homotetramer.

It catalyses the reaction (S)-lactaldehyde + NAD(+) + H2O = (S)-lactate + NADH + 2 H(+). The protein operates within cofactor biosynthesis; coenzyme F420 biosynthesis. Functionally, involved in F420 biosynthesis through the oxidation of lactaldehyde to lactate. The substrate preference order is propionaldehyde &gt; DL-lactaldehyde, DL-glyceraldehyde &gt; crotonaldehyde &gt; glycolaldehyde &gt; acetaldehyde, acrolein &gt; formaldehyde. No activity was observed towards methylglyoxal or glyceraldehyde-3-phosphate. Has a preference for NAD over NADP. The chain is Lactaldehyde dehydrogenase from Methanocaldococcus jannaschii (strain ATCC 43067 / DSM 2661 / JAL-1 / JCM 10045 / NBRC 100440) (Methanococcus jannaschii).